Reading from the N-terminus, the 110-residue chain is U32-theraphotoxin-Cg1a (110 aa).

A signal peptide spans 1–19 (MNHCFLILFTLIVFTVVWS). A propeptide spanning residues 20–43 (LEENEEYPDEDEMIESFMDGYSYR) is cleaved from the precursor. Intrachain disulfides connect Cys49/Cys63, Cys56/Cys69, Cys60/Cys105, and Cys62/Cys80.

The protein belongs to the neurotoxin 03 (Tx2) family. 02 subfamily. Expressed by the venom gland.

Its subcellular location is the secreted. In terms of biological role, probable ion channel inhibitor. This Chilobrachys guangxiensis (Chinese earth tiger tarantula) protein is U32-theraphotoxin-Cg1a.